A 268-amino-acid chain; its full sequence is Chymotrypsin-C (268 aa).

Residues 1–16 (MLGITVFTTFLAYASS) form the signal peptide. The propeptide at 17-29 (CGAPIFQPNLSAR) is activation peptide. Cystine bridges form between cysteine 17–cysteine 141, cysteine 59–cysteine 75, cysteine 155–cysteine 222, cysteine 186–cysteine 202, and cysteine 212–cysteine 243. Asparagine 25 is a glycosylation site (N-linked (GlcNAc...) asparagine). The Peptidase S1 domain occupies 30–268 (VVGGEDAIPH…IDWINQKLQL (239 aa)). Active-site charge relay system residues include histidine 74 and aspartate 121. Serine 216 serves as the catalytic Charge relay system.

It belongs to the peptidase S1 family. Elastase subfamily. In terms of assembly, monomer. The zymogen is secreted as a ternary complex composed of procarboxypeptidase A, chymotrypsinogen C and proproteinase E. As to expression, pancreas.

It is found in the secreted. It localises to the extracellular space. The catalysed reaction is Preferential cleavage: Leu-|-Xaa, Tyr-|-Xaa, Phe-|-Xaa, Met-|-Xaa, Trp-|-Xaa, Gln-|-Xaa, Asn-|-Xaa.. Regulates activation and degradation of trypsinogens and procarboxypeptidases by targeting specific cleavage sites within their zymogen precursors. Has chymotrypsin-type protease activity and hypocalcemic activity. The sequence is that of Chymotrypsin-C (CTRC) from Bos taurus (Bovine).